The primary structure comprises 85 residues: Conotoxin Lt28.7 (85 aa).

The signal sequence occupies residues 1-21; it reads MPKLEMMLLVLLILPLCYIDA. A propeptide spanning residues 22 to 40 is cleaved from the precursor; sequence VGPPPPWNMEDEIIEHWQE.

The protein belongs to the conotoxin D superfamily. Contains 5 disulfide bonds. Expressed by the venom duct.

The protein localises to the secreted. Probable neurotoxin. In Conus litteratus (Lettered cone), this protein is Conotoxin Lt28.7.